The following is a 223-amino-acid chain: Putative germin-like protein 2-3 (223 aa).

The N-terminal stretch at 1–28 (MAAIRASFLLAAAALLALWCSDHGGVVA) is a signal peptide. Residues Cys-38 and Cys-53 are joined by a disulfide bond. The Cupin type-1 domain maps to 67–217 (SGLHMAGNTT…AFQVEKTVVD (151 aa)). A glycan (N-linked (GlcNAc...) asparagine) is linked at Asn-74. The Mn(2+) site is built by His-115, His-117, Glu-122, and His-163.

This sequence belongs to the germin family. Oligomer (believed to be a pentamer but probably hexamer).

It localises to the secreted. The protein localises to the extracellular space. It is found in the apoplast. May play a role in plant defense. Probably has no oxalate oxidase activity even if the active site is conserved. In Oryza sativa subsp. japonica (Rice), this protein is Putative germin-like protein 2-3.